A 256-amino-acid chain; its full sequence is Imidazole glycerol phosphate synthase subunit HisF (256 aa).

Active-site residues include Asp12 and Asp131.

The protein belongs to the HisA/HisF family. Heterodimer of HisH and HisF.

It localises to the cytoplasm. The enzyme catalyses 5-[(5-phospho-1-deoxy-D-ribulos-1-ylimino)methylamino]-1-(5-phospho-beta-D-ribosyl)imidazole-4-carboxamide + L-glutamine = D-erythro-1-(imidazol-4-yl)glycerol 3-phosphate + 5-amino-1-(5-phospho-beta-D-ribosyl)imidazole-4-carboxamide + L-glutamate + H(+). The protein operates within amino-acid biosynthesis; L-histidine biosynthesis; L-histidine from 5-phospho-alpha-D-ribose 1-diphosphate: step 5/9. In terms of biological role, IGPS catalyzes the conversion of PRFAR and glutamine to IGP, AICAR and glutamate. The HisF subunit catalyzes the cyclization activity that produces IGP and AICAR from PRFAR using the ammonia provided by the HisH subunit. The sequence is that of Imidazole glycerol phosphate synthase subunit HisF from Renibacterium salmoninarum (strain ATCC 33209 / DSM 20767 / JCM 11484 / NBRC 15589 / NCIMB 2235).